The sequence spans 258 residues: UPF0246 protein VV0659 (258 aa).

It belongs to the UPF0246 family.

This Vibrio vulnificus (strain YJ016) protein is UPF0246 protein VV0659.